Here is a 144-residue protein sequence, read N- to C-terminus: Actin-associated protein FAM107A (144 aa).

A coiled-coil region spans residues 70–90 (VLEHRRRNQLIKKKEEELEAK). The Nuclear localization signal signature appears at 74–84 (RRRNQLIKKKE). The disordered stretch occupies residues 104–123 (QQRLNQLENPPQRDEDHAPE). The segment covering 114–123 (PQRDEDHAPE) has biased composition (basic and acidic residues).

As to quaternary structure, interacts with ACTB. Interacts with F-actin. Interacts with PRDX1. Interacts with COMMD1; this interaction stabilizes COMMD1 in the nucleus. Interacts with MAP1A. Expressed in septum, the neocortex, the CA3 region of the hippocampus and the cerebellum (at protein level).

The protein localises to the nucleus. Its subcellular location is the cytoplasm. It is found in the cytoskeleton. It localises to the stress fiber. The protein resides in the cell junction. The protein localises to the focal adhesion. Its subcellular location is the cell projection. It is found in the ruffle membrane. It localises to the synapse. Functionally, stress-inducible actin-binding protein that plays a role in synaptic and cognitive functions by modulating actin filamentous (F-actin) dynamics. Mediates polymerization of globular actin to F-actin. Also binds to, stabilizes and bundles F-actin. Involved in synaptic function by regulating neurite outgrowth in an actin-dependent manner and for the acquisition of hippocampus-dependent cognitive function, such as learning and long-term memory. Plays a role in the actin and microtubule cytoskeleton organization; negatively regulates focal adhesion (FA) assembly promoting malignant glial cell migration in an actin-, microtubule- and MAP1A-dependent manner. Also involved in neuroblastoma G1/S phase cell cycle progression and cell proliferation inhibition by stimulating ubiquitination of NF-kappa-B subunit RELA and NF-kappa-B degradation in a COMMD1- and actin-dependent manner. May play a role in tumor development. This Mus musculus (Mouse) protein is Actin-associated protein FAM107A.